The sequence spans 222 residues: N-(5'-phosphoribosyl)anthranilate isomerase (222 aa).

The protein belongs to the TrpF family.

The enzyme catalyses N-(5-phospho-beta-D-ribosyl)anthranilate = 1-(2-carboxyphenylamino)-1-deoxy-D-ribulose 5-phosphate. The protein operates within amino-acid biosynthesis; L-tryptophan biosynthesis; L-tryptophan from chorismate: step 3/5. The polypeptide is N-(5'-phosphoribosyl)anthranilate isomerase (Symbiobacterium thermophilum (strain DSM 24528 / JCM 14929 / IAM 14863 / T)).